The sequence spans 64 residues: UPF0370 protein YPA_2246 (64 aa).

The helical transmembrane segment at tryptophan 3–isoleucine 23 threads the bilayer. Positions aspartate 36–asparagine 47 are enriched in basic and acidic residues. Residues aspartate 36 to lysine 64 form a disordered region.

The protein belongs to the UPF0370 family.

The protein resides in the cell membrane. The polypeptide is UPF0370 protein YPA_2246 (Yersinia pestis bv. Antiqua (strain Antiqua)).